A 225-amino-acid polypeptide reads, in one-letter code: UPF0758 protein Sputw3181_0338 (225 aa).

In terms of domain architecture, MPN spans 102–224 (VLTNPDLTRD…IVSFAERGWI (123 aa)). His173, His175, and Asp186 together coordinate Zn(2+). A JAMM motif motif is present at residues 173–186 (HNHPSGIAEPSQAD).

The protein belongs to the UPF0758 family.

The chain is UPF0758 protein Sputw3181_0338 from Shewanella sp. (strain W3-18-1).